The following is a 485-amino-acid chain: Cysteine--tRNA ligase (485 aa).

Cysteine 27 serves as a coordination point for Zn(2+). The short motif at 29 to 39 (ITAYDFSHIGH) is the 'HIGH' region element. Residues cysteine 208, histidine 233, and glutamate 237 each contribute to the Zn(2+) site. Residues 265–269 (KMSKS) carry the 'KMSKS' region motif. ATP is bound at residue lysine 268.

This sequence belongs to the class-I aminoacyl-tRNA synthetase family. As to quaternary structure, monomer. Zn(2+) serves as cofactor.

It is found in the cytoplasm. The catalysed reaction is tRNA(Cys) + L-cysteine + ATP = L-cysteinyl-tRNA(Cys) + AMP + diphosphate. This is Cysteine--tRNA ligase from Lawsonia intracellularis (strain PHE/MN1-00).